The following is a 217-amino-acid chain: Large ribosomal subunit protein uL1 (217 aa).

It belongs to the universal ribosomal protein uL1 family.

The chain is Large ribosomal subunit protein uL1 (RpL10Ab) from Drosophila melanogaster (Fruit fly).